A 1081-amino-acid polypeptide reads, in one-letter code: Histone demethylase-like protein A (1081 aa).

The interval 37 to 173 (QHLQHPSLPN…LSGNTDYARY (137 aa)) is disordered. Positions 66-81 (SPSCNESNESNGETSS) are enriched in low complexity. Positions 119 to 132 (DTSNILSGSATSVS) are enriched in polar residues. A compositionally biased stretch (low complexity) spans 141–161 (NSTPPSTVNNVPSSSSITSDS). The 96-residue stretch at 192 to 287 (CVTAAYACRL…FGCVEIPPAL (96 aa)) folds into the SWIRM domain. The disordered stretch occupies residues 902 to 940 (ATAQKKKEPPCSNGFSAPVSTSAHPTDASAPARSNNSFS). Positions 914-925 (NGFSAPVSTSAH) are enriched in polar residues. The HMG box DNA-binding region spans 969–1049 (ARTGLNPFLL…TNTEIWDRWK (81 aa)).

This sequence belongs to the flavin monoamine oxidase family.

The protein resides in the nucleus. In terms of biological role, H3K4 demethylase-like protein. Might not act as a H3K4 demethylase or is not the major H3K4 demethylase since its deletion does not affect whole genome H3K4 methylation. The chain is Histone demethylase-like protein A from Aspergillus fumigatus (strain ATCC MYA-4609 / CBS 101355 / FGSC A1100 / Af293) (Neosartorya fumigata).